Here is a 371-residue protein sequence, read N- to C-terminus: Epoxyqueuosine reductase (371 aa).

The active-site Proton donor is Asp137. The region spanning 179–211 (IPLPVDTPVENQCGKCTACISSCPTNAILENGV) is the 4Fe-4S ferredoxin-type domain. Residues Cys191, Cys194, Cys197, Cys201, Cys217, Cys244, Cys247, and Cys251 each coordinate [4Fe-4S] cluster.

The protein belongs to the QueG family. In terms of assembly, monomer. Cob(II)alamin serves as cofactor. [4Fe-4S] cluster is required as a cofactor.

It localises to the cytoplasm. The enzyme catalyses epoxyqueuosine(34) in tRNA + AH2 = queuosine(34) in tRNA + A + H2O. Its pathway is tRNA modification; tRNA-queuosine biosynthesis. In terms of biological role, catalyzes the conversion of epoxyqueuosine (oQ) to queuosine (Q), which is a hypermodified base found in the wobble positions of tRNA(Asp), tRNA(Asn), tRNA(His) and tRNA(Tyr). The protein is Epoxyqueuosine reductase of Aliivibrio fischeri (strain ATCC 700601 / ES114) (Vibrio fischeri).